A 1188-amino-acid polypeptide reads, in one-letter code: Oxysterol-binding protein homolog 1 (1188 aa).

ANK repeat units lie at residues 51–80, 96–125, and 196–225; these read VLHL…STTN, NGNT…INDC, and TGDT…DPFK. One can recognise a PH domain in the interval 330–379; it reads MSSCSLHLDSSEKLKFEIIGGNNGVIRWHLKGNHPIETNRWVWAIQGAIR. S394 carries the post-translational modification Phosphoserine. 2 disordered regions span residues 415–546 and 661–692; these read ATSK…GDED and QKKL…QEST. Over residues 424–433 the composition is skewed to polar residues; it reads PHLSKSTLTQ. Over residues 443–462 the composition is skewed to low complexity; sequence TNNNNNKSNNDYDDNNNNNN. Residues 463-473 are compositionally biased toward acidic residues; the sequence is NDDDDYDDDDE. S490 and S500 each carry phosphoserine. A compositionally biased stretch (acidic residues) spans 514-529; it reads PSDDEGYSEDDSDDDG. Phosphoserine occurs at positions 678, 683, and 691. Phosphothreonine is present on residues T692 and T694. 2 positions are modified to phosphoserine: S708 and S712. Positions 716–722 match the FFAT motif; the sequence is EFFDAEE. The interval 721–755 is disordered; sequence EEAASDKKANDSEDLTTNKETPANAKPQEEAPEDE. Residues 800–1174 form an OSBP-related domain (ORD) region; the sequence is LWSVLKSMVG…YWKFNGEYWN (375 aa). Ergosterol is bound by residues D834 and K962.

The protein belongs to the OSBP family. As to quaternary structure, interacts with NVJ1. Interacts with the AAA ATPase AFG2; regulates OSH1 membrane association. AFG2 is required for membrane dissociation of OSH1. Interacts with SCS2.

It localises to the golgi apparatus membrane. The protein resides in the nucleus outer membrane. It is found in the endoplasmic reticulum membrane. The protein localises to the vacuole membrane. Its function is as follows. Lipid transport protein (LTP) involved in non-vesicular transfer of lipids between membranes. Functions in phosphoinositide-coupled directional transport of various lipids by carrying the lipid molecule in a hydrophobic pocket and transferring it between membranes through the cytosol. Involved in maintenance of intracellular sterol distribution and homeostasis. Involved in non-vesicular transport of ergosterol and PI(4)P at the NVJ. Binds sterol and PI4P in a mutually exclusive manner. May be involved in formation of PMN vesicles by altering the membrane lipid composition. The polypeptide is Oxysterol-binding protein homolog 1 (Saccharomyces cerevisiae (strain ATCC 204508 / S288c) (Baker's yeast)).